The sequence spans 429 residues: MPAIVLIGAQWGDEGKGKATDLLGGRLQWVVRYQGGNNAGHTVVLPNGDKFALHLIPSGILTPGVTNVIGNGVVVDPGVLLTELAGLDQRGVDTSRLLLSADAHLIMPYHVAIDKVTERFLGAKKIGTTGRGIGPCYQDKLARVGVRVQDVLDEKILTQKVEAALEFKNQVLVKIYNRKALDPQQVVDEVLEQADGFKHRIADTRLQLNEALERGETVLLEGSQGTLLDVDHGTYPYVTSSNPTSGGAAVGSGIGPTKITTVLGILKAYTTRVGSGPFPTELFDQNGEYLAKTGGEVGVTTGRARRTGWFDAVIARYATRVNGITDYFLTKLDVLSSLDTIPICVGYDVDGVRHDEMPMSQTDVHHAKPIYEEMPGWWEDISHARTFEELPKNAQNYVLRLEELSGAYISCIGVGPGRDETIVRRDVVR.

GTP contacts are provided by residues 12–18 (GDEGKGK) and 40–42 (GHT). Asp13 serves as the catalytic Proton acceptor. The Mg(2+) site is built by Asp13 and Gly40. IMP is bound by residues 13–16 (DEGK), 38–41 (NAGH), Thr129, Arg143, Gln224, Thr239, and Arg303. His41 (proton donor) is an active-site residue. 299–305 (VTTGRAR) is a binding site for substrate. GTP is bound by residues Arg305, 331 to 333 (KLD), and 413 to 415 (GVG).

It belongs to the adenylosuccinate synthetase family. As to quaternary structure, homodimer. Mg(2+) serves as cofactor.

It is found in the cytoplasm. It catalyses the reaction IMP + L-aspartate + GTP = N(6)-(1,2-dicarboxyethyl)-AMP + GDP + phosphate + 2 H(+). The protein operates within purine metabolism; AMP biosynthesis via de novo pathway; AMP from IMP: step 1/2. In terms of biological role, plays an important role in the de novo pathway of purine nucleotide biosynthesis. Catalyzes the first committed step in the biosynthesis of AMP from IMP. The sequence is that of Adenylosuccinate synthetase from Rhodococcus opacus (strain B4).